A 115-amino-acid chain; its full sequence is Splicing factor 3B subunit 6-like protein (115 aa).

The interval 9–22 is interaction with pre-mRNA branch site; it reads EVNSILFIKNLSFK. The RRM domain maps to 12–87; that stretch reads SILFIKNLSF…RYLVVHYYNP (76 aa).

It localises to the nucleus. Its function is as follows. Necessary for the splicing of pre-mRNA. The sequence is that of Splicing factor 3B subunit 6-like protein from Schizosaccharomyces pombe (strain 972 / ATCC 24843) (Fission yeast).